The following is a 125-amino-acid chain: Small ribosomal subunit protein uS13 (125 aa).

The tract at residues glutamine 90–lysine 125 is disordered.

Belongs to the universal ribosomal protein uS13 family. In terms of assembly, part of the 30S ribosomal subunit. Forms a loose heterodimer with protein S19. Forms two bridges to the 50S subunit in the 70S ribosome.

In terms of biological role, located at the top of the head of the 30S subunit, it contacts several helices of the 16S rRNA. In the 70S ribosome it contacts the 23S rRNA (bridge B1a) and protein L5 of the 50S subunit (bridge B1b), connecting the 2 subunits; these bridges are implicated in subunit movement. Contacts the tRNAs in the A and P-sites. This chain is Small ribosomal subunit protein uS13, found in Bifidobacterium longum subsp. infantis (strain ATCC 15697 / DSM 20088 / JCM 1222 / NCTC 11817 / S12).